Consider the following 353-residue polypeptide: MSKREAFNDTFLKAARGEKTNHVPVWYMRQAGRSQPEYRKLKEKYGLVEITHQPELCAYVTRLPVEQYGVDAAILYKDIMTPLPYIGVDVEIKNGIGPVIDQPVRSAADIEKLGELNPEQDVPYVLETIRLLVNEQLNVPLIGFSGAPFTLASYMIEGGPSKNYNKTKAFMHSMPQAWKMLMDKLADMIIVYAKAQINAGAKAIQIFDSWVGALNREDYRQFIKPVMDRIFRELSAEQVPLIMFGVGASHLAGDWHDLPLDVVGLDWRLGIDDARKQGITKTVQGNLDPSLLLAPWEVIEKKAKAILDQGMKTDGFIFNLGHGVFPDVNPETLKKLTAFVHEYSAAKKTEQSS.

Substrate contacts are provided by residues 29–33, Asp-78, Tyr-154, Ser-209, and His-322; that span reads RQAGR.

This sequence belongs to the uroporphyrinogen decarboxylase family. Homodimer.

It is found in the cytoplasm. The catalysed reaction is uroporphyrinogen III + 4 H(+) = coproporphyrinogen III + 4 CO2. It participates in porphyrin-containing compound metabolism; protoporphyrin-IX biosynthesis; coproporphyrinogen-III from 5-aminolevulinate: step 4/4. Catalyzes the decarboxylation of four acetate groups of uroporphyrinogen-III to yield coproporphyrinogen-III. In Bacillus velezensis (strain DSM 23117 / BGSC 10A6 / LMG 26770 / FZB42) (Bacillus amyloliquefaciens subsp. plantarum), this protein is Uroporphyrinogen decarboxylase.